We begin with the raw amino-acid sequence, 254 residues long: Putative cysteine-rich repeat secretory protein 37 (254 aa).

The N-terminal stretch at 1–29 is a signal peptide; sequence MYSSYSLSKRLVSIPILAIQLLLIRSVSS. 2 Gnk2-homologous domains span residues 36–138 and 145–251; these read YLNH…SIRS and YRNV…LYPF.

Belongs to the cysteine-rich repeat secretory protein family.

The protein localises to the secreted. The sequence is that of Putative cysteine-rich repeat secretory protein 37 (CRRSP37) from Arabidopsis thaliana (Mouse-ear cress).